The following is a 418-amino-acid chain: Serine--tRNA ligase (418 aa).

232 to 234 provides a ligand contact to L-serine; the sequence is TAE. ATP is bound by residues 263-265 and valine 279; that span reads RRE. Glutamate 286 provides a ligand contact to L-serine. An ATP-binding site is contributed by 350-353; that stretch reads EISS. An L-serine-binding site is contributed by serine 385.

It belongs to the class-II aminoacyl-tRNA synthetase family. Type-1 seryl-tRNA synthetase subfamily. As to quaternary structure, homodimer. The tRNA molecule binds across the dimer.

The protein localises to the cytoplasm. The enzyme catalyses tRNA(Ser) + L-serine + ATP = L-seryl-tRNA(Ser) + AMP + diphosphate + H(+). The catalysed reaction is tRNA(Sec) + L-serine + ATP = L-seryl-tRNA(Sec) + AMP + diphosphate + H(+). It functions in the pathway aminoacyl-tRNA biosynthesis; selenocysteinyl-tRNA(Sec) biosynthesis; L-seryl-tRNA(Sec) from L-serine and tRNA(Sec): step 1/1. In terms of biological role, catalyzes the attachment of serine to tRNA(Ser). Is also able to aminoacylate tRNA(Sec) with serine, to form the misacylated tRNA L-seryl-tRNA(Sec), which will be further converted into selenocysteinyl-tRNA(Sec). The protein is Serine--tRNA ligase of Leptospira biflexa serovar Patoc (strain Patoc 1 / Ames).